Consider the following 330-residue polypeptide: MKKTFILQQQEISFVKNTFTQYLIDKLGIIEVQGPILSQVGNGMQDNLSGIEKAVQVNVKCIPGATFEVVHSLAKWKRHTLARFGFKEGEGLFVHMKALRPDEDSLDPTHSVYVDQWDWEKVIPEGRRNFDFLKETVNEIYKAIRLTELAVEARFDIPSILPKQITFVHSEELVQRYPNMTGKERENAICKEHGAVFLIGIGGKLSDGKPHDGRAPDYDDWTTESENGYKGLNGDILVWNEQLGTAFELSSMGIRVDEKALRLQVELTGDQDRLEMDWHKDLLAGRLPLSIGGGIGQSRLVMFLLRKAHIGEVQSSVWPKAMLEKYKNIL.

It belongs to the class-II aminoacyl-tRNA synthetase family. AsnA subfamily.

It is found in the cytoplasm. It carries out the reaction L-aspartate + NH4(+) + ATP = L-asparagine + AMP + diphosphate + H(+). It participates in amino-acid biosynthesis; L-asparagine biosynthesis; L-asparagine from L-aspartate (ammonia route): step 1/1. This is Aspartate--ammonia ligase from Actinobacillus pleuropneumoniae serotype 7 (strain AP76).